The sequence spans 118 residues: Late cornified envelope protein 1E (118 aa).

Residues 1–10 are compositionally biased toward low complexity; the sequence is MSCQQSQQQC. 2 disordered regions span residues 1 to 23 and 84 to 118; these read MSCQ…CPPK and RSHR…GGCC. A compositionally biased stretch (pro residues) spans 11–23; the sequence is QPPPKCTPKCPPK. Residues 92 to 103 are compositionally biased toward low complexity; sequence SSDCCSQPSGGS. Gly residues predominate over residues 104–118; that stretch reads SCCGGGSGQHSGGCC.

It belongs to the LCE family. As to quaternary structure, interacts with CYSRT1. As to expression, skin-specific. Expression was readily detected in adult trunk skin, adult arm skin, fetal skin, penal skin, vulva, esophagus and tongue. Not expressed in the cervix, rectum, lung, colon, or placenta.

Functionally, precursors of the cornified envelope of the stratum corneum. This Homo sapiens (Human) protein is Late cornified envelope protein 1E (LCE1E).